A 430-amino-acid polypeptide reads, in one-letter code: Divergent protein kinase domain 2A (430 aa).

An N-terminal signal peptide occupies residues 1-35 (MWRLVPLKLGRLSRALKLAALGSLLVLMLLHSPSL).

This sequence belongs to the DIPK family. Expressed in heart, brain, liver, spleen, kidney, lung, thymus, testis, ovary and muscle.

The protein localises to the golgi apparatus. It localises to the cytoplasmic vesicle. Its subcellular location is the COPI-coated vesicle. It is found in the secreted. Its function is as follows. May play a role in cardiomyocyte proliferation through paracrine signaling and activation of the PI3-kinase signaling cascade. The polypeptide is Divergent protein kinase domain 2A (Dipk2a) (Mus musculus (Mouse)).